A 242-amino-acid chain; its full sequence is C-reactive protein 1.4 (242 aa).

The signal sequence occupies residues 1–24 (MKTFHGPTFGTAVFLYLLLFLTSA). In terms of domain architecture, Pentraxin (PTX) spans 30–241 (ITSKVKFPPS…GVVLSPNEIC (212 aa)). Phosphocholine is bound by residues threonine 60 and tyrosine 63. 2 disulfide bridges follow: cysteine 62-cysteine 125 and cysteine 112-cysteine 144. Ca(2+) contacts are provided by aspartate 85 and asparagine 86. The N-linked (GlcNAc...) asparagine glycan is linked to asparagine 147. The Ca(2+) site is built by glutamate 168, glutamine 169, aspartate 170, and glutamine 180. Cysteines 207 and 241 form a disulfide.

The protein belongs to the pentraxin family. Homopentamer. Pentraxin (or pentaxin) have a discoid arrangement of 5 non-covalently bound subunits. Requires Ca(2+) as cofactor.

It is found in the secreted. In terms of biological role, might serve the role of immunoglobulins. This is C-reactive protein 1.4 from Limulus polyphemus (Atlantic horseshoe crab).